A 393-amino-acid chain; its full sequence is uncharacterized protein (393 aa).

8 helical membrane-spanning segments follow: residues 15–35 (IVAF…VTIF), 56–76 (WGWI…NVII), 86–106 (FYAS…FQIV), 131–151 (AVLI…LITW), 176–196 (LSLT…VIAF), 253–273 (LLAN…VFMI), 289–309 (LIDL…IPVA), and 349–369 (VYLP…QVIW).

It is found in the cell membrane. This is an uncharacterized protein from Mycoplasma genitalium (strain ATCC 33530 / DSM 19775 / NCTC 10195 / G37) (Mycoplasmoides genitalium).